The chain runs to 179 residues: Large ribosomal subunit protein uL5 (179 aa).

Belongs to the universal ribosomal protein uL5 family. In terms of assembly, part of the 50S ribosomal subunit; part of the 5S rRNA/L5/L18/L25 subcomplex. Contacts the 5S rRNA and the P site tRNA. Forms a bridge to the 30S subunit in the 70S ribosome.

In terms of biological role, this is one of the proteins that bind and probably mediate the attachment of the 5S RNA into the large ribosomal subunit, where it forms part of the central protuberance. In the 70S ribosome it contacts protein S13 of the 30S subunit (bridge B1b), connecting the 2 subunits; this bridge is implicated in subunit movement. Contacts the P site tRNA; the 5S rRNA and some of its associated proteins might help stabilize positioning of ribosome-bound tRNAs. The polypeptide is Large ribosomal subunit protein uL5 (Shewanella frigidimarina (strain NCIMB 400)).